The chain runs to 190 residues: GMP synthase [glutamine-hydrolyzing] subunit A (190 aa).

The Glutamine amidotransferase type-1 domain occupies 2–189; that stretch reads TILVINNKGQ…YEICKKRCNN (188 aa). C76 functions as the Nucleophile in the catalytic mechanism. Active-site residues include H163 and E165.

As to quaternary structure, heterodimer composed of a glutamine amidotransferase subunit (A) and a GMP-binding subunit (B).

It carries out the reaction XMP + L-glutamine + ATP + H2O = GMP + L-glutamate + AMP + diphosphate + 2 H(+). It participates in purine metabolism; GMP biosynthesis; GMP from XMP (L-Gln route): step 1/1. Functionally, catalyzes the synthesis of GMP from XMP. In Methanobrevibacter smithii (strain ATCC 35061 / DSM 861 / OCM 144 / PS), this protein is GMP synthase [glutamine-hydrolyzing] subunit A.